Here is a 557-residue protein sequence, read N- to C-terminus: Glutamyl-tRNA(Gln) amidotransferase subunit B, mitochondrial (557 aa).

Residues 1–41 (MAAPMLRWGCRGRRWAFARVDGGSCHRRGAPTGSTSNQIRG) constitute a mitochondrion transit peptide. Residues 26 to 45 (HRRGAPTGSTSNQIRGESSV) form a disordered region. Residues 32-45 (TGSTSNQIRGESSV) show a composition bias toward polar residues. At K529 the chain carries N6-succinyllysine.

It belongs to the GatB/GatE family. GatB subfamily. Subunit of the heterotrimeric GatCAB amidotransferase (AdT) complex, composed of A (QRSL1), B (GATB) and C (GATC) subunits. In terms of tissue distribution, predominantly expressed in tissues characterized by high rates of oxidative phosphorylation (OxPhos), including muscle and heart.

The protein resides in the mitochondrion. The catalysed reaction is L-glutamyl-tRNA(Gln) + L-glutamine + ATP + H2O = L-glutaminyl-tRNA(Gln) + L-glutamate + ADP + phosphate + H(+). Functionally, allows the formation of correctly charged Gln-tRNA(Gln) through the transamidation of misacylated Glu-tRNA(Gln) in the mitochondria. The reaction takes place in the presence of glutamine and ATP through an activated gamma-phospho-Glu-tRNA(Gln). In Homo sapiens (Human), this protein is Glutamyl-tRNA(Gln) amidotransferase subunit B, mitochondrial.